Reading from the N-terminus, the 244-residue chain is High affinity immunoglobulin epsilon receptor subunit beta (244 aa).

Residues 1 to 59 lie on the Cytoplasmic side of the membrane; it reads MDTESNRRANLALPQEPSSVPAFEVLEISPQEVSSGRLLKSASSPPLHTWLTVLKKEQE. A helical membrane pass occupies residues 60-79; sequence FLGVTQILTAMICLCFGTVV. Over 80–97 the chain is Extracellular; the sequence is CSVLDISHIEGDIFSSFK. A helical transmembrane segment spans residues 98–117; sequence AGYPFWGAIFFSISGMLSII. The Cytoplasmic segment spans residues 118 to 130; the sequence is SERRNATYLVRGS. The chain crosses the membrane as a helical span at residues 131-150; it reads LGANTASSIAGGTGITILII. Residues 151 to 180 lie on the Extracellular side of the membrane; sequence NLKKSLAYIHIHSCQKFFETKCFMASFSTE. Residues 181 to 200 traverse the membrane as a helical segment; sequence IVVMMLFLTILGLGSAVSLT. At 201–244 the chain is on the cytoplasmic side; it reads ICGAGEELKGNKVPEDRVYEELNIYSATYSELEDPGEMSPPIDL. Residues tyrosine 219 and tyrosine 225 each carry the phosphotyrosine modification. Serine 226 is modified (phosphoserine). The residue at position 229 (tyrosine 229) is a Phosphotyrosine.

The protein belongs to the MS4A family. In terms of assembly, tetramer of an alpha chain, a beta chain, and two disulfide linked gamma chains. Binds LILRB1. Interacts with FGR, FES/FPS and LYN. Post-translationally, phosphorylated on tyrosine residues by LYN. In terms of tissue distribution, found on the surface of mast cells and basophils.

Its subcellular location is the membrane. In terms of biological role, high affinity receptor that binds to the Fc region of immunoglobulins epsilon. Aggregation of FCER1 by multivalent antigens is required for the full mast cell response, including the release of preformed mediators (such as histamine) by degranulation and de novo production of lipid mediators and cytokines. Also mediates the secretion of important lymphokines. Binding of allergen to receptor-bound IgE leads to cell activation and the release of mediators responsible for the manifestations of allergy. This Homo sapiens (Human) protein is High affinity immunoglobulin epsilon receptor subunit beta (MS4A2).